We begin with the raw amino-acid sequence, 141 residues long: 6,7-dimethyl-8-ribityllumazine synthase (141 aa).

5-amino-6-(D-ribitylamino)uracil contacts are provided by residues phenylalanine 11, 42–44 (ALE), and 66–68 (VVI). Residue 71–72 (ET) coordinates (2S)-2-hydroxy-3-oxobutyl phosphate. The Proton donor role is filled by histidine 74. Residue asparagine 98 coordinates 5-amino-6-(D-ribitylamino)uracil. Arginine 112 serves as a coordination point for (2S)-2-hydroxy-3-oxobutyl phosphate.

Belongs to the DMRL synthase family.

The enzyme catalyses (2S)-2-hydroxy-3-oxobutyl phosphate + 5-amino-6-(D-ribitylamino)uracil = 6,7-dimethyl-8-(1-D-ribityl)lumazine + phosphate + 2 H2O + H(+). It participates in cofactor biosynthesis; riboflavin biosynthesis; riboflavin from 2-hydroxy-3-oxobutyl phosphate and 5-amino-6-(D-ribitylamino)uracil: step 1/2. Functionally, catalyzes the formation of 6,7-dimethyl-8-ribityllumazine by condensation of 5-amino-6-(D-ribitylamino)uracil with 3,4-dihydroxy-2-butanone 4-phosphate. This is the penultimate step in the biosynthesis of riboflavin. The protein is 6,7-dimethyl-8-ribityllumazine synthase of Sphingopyxis alaskensis (strain DSM 13593 / LMG 18877 / RB2256) (Sphingomonas alaskensis).